The sequence spans 194 residues: Large ribosomal subunit protein uL10 (194 aa).

Over residues 172-187 (EGGAAEAPAEAATEAP) the composition is skewed to low complexity. Residues 172-194 (EGGAAEAPAEAATEAPAEAEAES) form a disordered region.

It belongs to the universal ribosomal protein uL10 family. In terms of assembly, part of the ribosomal stalk of the 50S ribosomal subunit. The N-terminus interacts with L11 and the large rRNA to form the base of the stalk. The C-terminus forms an elongated spine to which L12 dimers bind in a sequential fashion forming a multimeric L10(L12)X complex.

Forms part of the ribosomal stalk, playing a central role in the interaction of the ribosome with GTP-bound translation factors. This Rhodococcus erythropolis (strain PR4 / NBRC 100887) protein is Large ribosomal subunit protein uL10.